Here is a 695-residue protein sequence, read N- to C-terminus: UvrABC system protein B (695 aa).

The Helicase ATP-binding domain maps to 45–434; it reads EGIEDGLSFQ…QVVEQVVRPT (390 aa). 58–65 contributes to the ATP binding site; that stretch reads GVTGSGKT. A Beta-hairpin motif is present at residues 111–134; the sequence is YYDYYQPEAYVPQRDLFIEKDSSI. The region spanning 449 to 602 is the Helicase C-terminal domain; it reads QVDDLLSEIN…QMAFNEANGI (154 aa). The 36-residue stretch at 646-681 folds into the UVR domain; that stretch reads SKEIKRLEKLMMDHAKNLEFEKAAQVRDQLAKLKAQ.

This sequence belongs to the UvrB family. In terms of assembly, forms a heterotetramer with UvrA during the search for lesions. Interacts with UvrC in an incision complex.

The protein resides in the cytoplasm. Its function is as follows. The UvrABC repair system catalyzes the recognition and processing of DNA lesions. A damage recognition complex composed of 2 UvrA and 2 UvrB subunits scans DNA for abnormalities. Upon binding of the UvrA(2)B(2) complex to a putative damaged site, the DNA wraps around one UvrB monomer. DNA wrap is dependent on ATP binding by UvrB and probably causes local melting of the DNA helix, facilitating insertion of UvrB beta-hairpin between the DNA strands. Then UvrB probes one DNA strand for the presence of a lesion. If a lesion is found the UvrA subunits dissociate and the UvrB-DNA preincision complex is formed. This complex is subsequently bound by UvrC and the second UvrB is released. If no lesion is found, the DNA wraps around the other UvrB subunit that will check the other stand for damage. The polypeptide is UvrABC system protein B (Cupriavidus pinatubonensis (strain JMP 134 / LMG 1197) (Cupriavidus necator (strain JMP 134))).